The primary structure comprises 955 residues: Anoctamin-4 (955 aa).

The Extracellular portion of the chain corresponds to 1–352 (MEASSSGITN…FGEKIGLYFA (352 aa)). Residues 72-100 (CKDDDSLLHPGNLTSTSDDASRLEAGGET) form a disordered region. N-linked (GlcNAc...) asparagine glycosylation is found at Asn-83, Asn-105, Asn-257, and Asn-288. A helical membrane pass occupies residues 353-373 (WLGWYTGMLFPAAFIGLFVFL). Residues 374 to 424 (YGVTTLDHSQVSKEVCQATDIIMCPVCDKYCPFMRLSDSCVYAKVTHLFDN) lie on the Cytoplasmic side of the membrane. A helical transmembrane segment spans residues 425–445 (GATVFFAVFMAVWATVFLEFW). At 446 to 505 (KRRRAVIAYDWDLIDWEEEEEEIRPQFEAKYSKKERMNPISGKPEPYQAFTDKCSRLIVS) the chain is on the extracellular side. A helical transmembrane segment spans residues 506–526 (ASGIFFMICVVIAAVFGIVIY). The Cytoplasmic portion of the chain corresponds to 527–547 (RVVTVSTFAAFKWALIRNNSQ). A helical membrane pass occupies residues 548–568 (VATTGTAVCINFCIIMLLNVL). Residues 569-595 (YEKVALLLTNLEQPRTESEWENSFTLK) lie on the Extracellular side of the membrane. Residues 596–616 (MFLFQFVNLNSSTFYIAFFLG) form a helical membrane-spanning segment. The Cytoplasmic portion of the chain corresponds to 617–715 (RFTGHPGAYL…AYGLFDEYLE (99 aa)). A helical transmembrane segment spans residues 716–736 (MILQFGFTTIFVAAFPLAPLL). Over 737–768 (ALLNNIIEIRLDAYKFVTQWRRPLASRAKDIG) the chain is Extracellular. A helical membrane pass occupies residues 769–789 (IWYGILEGIGILSVITNAFVI). The Cytoplasmic segment spans residues 790–885 (AITSDFIPRL…QFWHVLAARL (96 aa)). Residues 886-906 (AFIIVFEHLVFCIKHLISYLI) traverse the membrane as a helical segment. Residues 907–955 (PDLPKDLRDRMRREKYLIQEMMYEAELERLQKERKERKKNGKAHHNEWP) are Extracellular-facing.

This sequence belongs to the anoctamin family.

The protein resides in the cell membrane. It catalyses the reaction a 1,2-diacyl-sn-glycero-3-phospho-L-serine(in) = a 1,2-diacyl-sn-glycero-3-phospho-L-serine(out). It carries out the reaction a beta-D-galactosyl-(1&lt;-&gt;1')-N-acylsphing-4-enine(out) = a beta-D-galactosyl-(1&lt;-&gt;1')-N-acylsphing-4-enine(in). The catalysed reaction is a 1,2-diacyl-sn-glycero-3-phosphocholine(in) = a 1,2-diacyl-sn-glycero-3-phosphocholine(out). Functionally, has calcium-dependent phospholipid scramblase activity; scrambles phosphatidylserine, phosphatidylcholine and galactosylceramide. Does not exhibit calcium-activated chloride channel (CaCC) activity. The protein is Anoctamin-4 (ANO4) of Homo sapiens (Human).